Reading from the N-terminus, the 362-residue chain is E3 ubiquitin-protein ligase rififylin (362 aa).

Positions 17 to 37 (ETPPPQGARTQAYSNPGYSSF) are disordered. Over residues 24–37 (ARTQAYSNPGYSSF) the composition is skewed to polar residues. The FYVE-type zinc-finger motif lies at 41 to 93 (TGSEPSCKACGVHFASTTRKQTCLDCKKNFCMTCSSQEGNGPRLCLLCLRFRA). The region spanning 101–120 (LMKMKVKDLRDYLSLHDIST) is the SAP 1 domain. The interval 162 to 183 (LTQPQSSTVPPTSPGLPSSPAQ) is disordered. 4 positions are modified to phosphoserine: Ser-225, Ser-228, Ser-231, and Ser-239. An SAP 2 domain is found at 249-263 (IEGLTVRQLKEILAR). An RING-type zinc finger spans residues 315-350 (CKICMDSPIDCVLLECGHMVTCTKCGKRMNECPICR).

Interacts with CASP8 and CASP10. Interacts with RIPK1 (via protein kinase domain); involved in RIPK1 ubiquitination. Interacts with PRR5L. Interacts (via RING-type zinc finger) with p53/TP53; involved in p53/TP53 ubiquitination. Interacts (via RING-type zinc finger) with MDM2; the interaction stabilizes MDM2. Post-translationally, autoubiquitinated. In terms of processing, palmitoylated. Undergoes caspase-mediated cleavage upon death-receptor activation, by TNFSF10 for instance. May be mediated by the caspases CASP8 and CASP10 in a negative feedback loop. Ubiquitous. Detected in cerebrum, cerebellum, midbrain, brain stem, hippocampus, striatum, liver, heart, lung, kidney, muscle, spleen and testis.

Its subcellular location is the cytoplasm. The protein localises to the cytosol. It is found in the cell membrane. It localises to the recycling endosome membrane. The catalysed reaction is S-ubiquitinyl-[E2 ubiquitin-conjugating enzyme]-L-cysteine + [acceptor protein]-L-lysine = [E2 ubiquitin-conjugating enzyme]-L-cysteine + N(6)-ubiquitinyl-[acceptor protein]-L-lysine.. The protein operates within protein modification; protein ubiquitination. E3 ubiquitin-protein ligase that regulates several biological processes through the ubiquitin-mediated proteasomal degradation of various target proteins. Mediates 'Lys-48'-linked polyubiquitination of PRR5L and its subsequent proteasomal degradation thereby indirectly regulating cell migration through the mTORC2 complex. Also ubiquitinates the caspases CASP8 and CASP10, promoting their proteasomal degradation, to negatively regulate apoptosis downstream of death domain receptors. Also negatively regulates the tumor necrosis factor-mediated signaling pathway through targeting of RIPK1 to ubiquitin-mediated proteasomal degradation. Negatively regulates p53/TP53 through its direct ubiquitination and targeting to proteasomal degradation. Indirectly, may also negatively regulate p53/TP53 through ubiquitination and degradation of SFN. May also play a role in endocytic recycling. The polypeptide is E3 ubiquitin-protein ligase rififylin (Rattus norvegicus (Rat)).